The following is a 248-amino-acid chain: Ubiquinone/menaquinone biosynthesis C-methyltransferase UbiE (248 aa).

S-adenosyl-L-methionine is bound by residues S68 and D92.

Belongs to the class I-like SAM-binding methyltransferase superfamily. MenG/UbiE family.

The catalysed reaction is a 2-demethylmenaquinol + S-adenosyl-L-methionine = a menaquinol + S-adenosyl-L-homocysteine + H(+). The enzyme catalyses a 2-methoxy-6-(all-trans-polyprenyl)benzene-1,4-diol + S-adenosyl-L-methionine = a 5-methoxy-2-methyl-3-(all-trans-polyprenyl)benzene-1,4-diol + S-adenosyl-L-homocysteine + H(+). It participates in quinol/quinone metabolism; menaquinone biosynthesis; menaquinol from 1,4-dihydroxy-2-naphthoate: step 2/2. Its pathway is cofactor biosynthesis; ubiquinone biosynthesis. In terms of biological role, methyltransferase required for the conversion of demethylmenaquinol (DMKH2) to menaquinol (MKH2) and the conversion of 2-polyprenyl-6-methoxy-1,4-benzoquinol (DDMQH2) to 2-polyprenyl-3-methyl-6-methoxy-1,4-benzoquinol (DMQH2). In Rickettsia akari (strain Hartford), this protein is Ubiquinone/menaquinone biosynthesis C-methyltransferase UbiE.